The following is a 214-amino-acid chain: Vascular endothelial growth factor A (214 aa).

A signal peptide spans 1–26; that stretch reads MNFLLSWVHWTLALLLYLHHAKWSQA. 3 disulfide bridges follow: Cys51-Cys93, Cys82-Cys127, and Cys86-Cys129. Asn100 carries an N-linked (GlcNAc...) asparagine glycan. Basic and acidic residues predominate over residues 131 to 142; sequence PKKDRTKPEKKS. The interval 131 to 159 is disordered; the sequence is PKKDRTKPEKKSVRGKGKGQKRKRKKSRF. The span at 143–159 shows a compositional bias: basic residues; sequence VRGKGKGQKRKRKKSRF.

The protein belongs to the PDGF/VEGF growth factor family. In terms of assembly, homodimer; disulfide-linked. Also found as heterodimer with PGF. Interacts with NRP1. Interacts with isoform 2 of BSG. Interacts with CD82; this interaction inhibits VEGFA-mediated signaling pathway. Expressed in the pituitary, in brain, in particularly in supraoptic and paraventricular nuclei and the choroid plexus. Also found abundantly in the corpus luteum of the ovary and in kidney glomeruli. Expressed in the ductal epithelial cells of post-pubertal mammary glands. Expressed in the ductal and alveolar epithelial cells throughout the whole period of gestational evolution, lactation and involution.

It localises to the secreted. In terms of biological role, growth factor active in angiogenesis, vasculogenesis and endothelial cell growth. Induces endothelial cell proliferation, promotes cell migration, inhibits apoptosis and induces permeabilization of blood vessels. Binds to the FLT1/VEGFR1 and KDR/VEGFR2 receptors, heparan sulfate and heparin. May play a role in increasing vascular permeability during lactation, when increased transport of molecules from the blood is required for efficient milk protein synthesis. Binding to NRP1 receptor initiates a signaling pathway needed for motor neuron axon guidance and cell body migration, including for the caudal migration of facial motor neurons from rhombomere 4 to rhombomere 6 during embryonic development. Also binds the DEAR/FBXW7-AS1 receptor. The sequence is that of Vascular endothelial growth factor A (Vegfa) from Rattus norvegicus (Rat).